The primary structure comprises 264 residues: tRNA (guanine-N(1)-)-methyltransferase (264 aa).

S-adenosyl-L-methionine-binding positions include G116 and 136–141 (VGDFVL).

This sequence belongs to the RNA methyltransferase TrmD family. Homodimer.

It is found in the cytoplasm. It catalyses the reaction guanosine(37) in tRNA + S-adenosyl-L-methionine = N(1)-methylguanosine(37) in tRNA + S-adenosyl-L-homocysteine + H(+). Its function is as follows. Specifically methylates guanosine-37 in various tRNAs. The polypeptide is tRNA (guanine-N(1)-)-methyltransferase (Koribacter versatilis (strain Ellin345)).